A 175-amino-acid chain; its full sequence is Large ribosomal subunit protein uL10 (175 aa).

It belongs to the universal ribosomal protein uL10 family. In terms of assembly, part of the ribosomal stalk of the 50S ribosomal subunit. The N-terminus interacts with L11 and the large rRNA to form the base of the stalk. The C-terminus forms an elongated spine to which L12 dimers bind in a sequential fashion forming a multimeric L10(L12)X complex.

Forms part of the ribosomal stalk, playing a central role in the interaction of the ribosome with GTP-bound translation factors. The polypeptide is Large ribosomal subunit protein uL10 (Prochlorococcus marinus (strain AS9601)).